We begin with the raw amino-acid sequence, 539 residues long: Probable protein kinase UbiB (539 aa).

Residues 23-43 traverse the membrane as a helical segment; it reads DLLFALPLPWWMLALRFVLPW. Residues 125–492 enclose the Protein kinase domain; sequence RFDEKPLASA…WHDRKDEPVL (368 aa). Residues 131-139 and Lys-153 each bind ATP; that span reads LASASVAQV. Catalysis depends on Asp-288, which acts as the Proton acceptor. A run of 2 helical transmembrane segments spans residues 494 to 514 and 517 to 537; these read LIGAALLVGGAIQGWVMSEAA and LLTLTAWPAAIMLIAGLYLIV.

The protein belongs to the ABC1 family. UbiB subfamily.

Its subcellular location is the cell inner membrane. It participates in cofactor biosynthesis; ubiquinone biosynthesis [regulation]. Its function is as follows. Is probably a protein kinase regulator of UbiI activity which is involved in aerobic coenzyme Q (ubiquinone) biosynthesis. The sequence is that of Probable protein kinase UbiB from Pseudomonas syringae pv. syringae (strain B728a).